A 282-amino-acid polypeptide reads, in one-letter code: Large ribosomal subunit protein uL2 (282 aa).

Disordered regions lie at residues 31 to 56 (EKSLLDSQSHSAGRNNAGKMTVRHRG) and 226 to 282 (SVMN…GSKM). Over residues 35–44 (LDSQSHSAGR) the composition is skewed to polar residues. The span at 257-266 (TVGKKTRSKK) shows a compositional bias: basic residues.

This sequence belongs to the universal ribosomal protein uL2 family. As to quaternary structure, part of the 50S ribosomal subunit. Forms a bridge to the 30S subunit in the 70S ribosome.

Functionally, one of the primary rRNA binding proteins. Required for association of the 30S and 50S subunits to form the 70S ribosome, for tRNA binding and peptide bond formation. It has been suggested to have peptidyltransferase activity; this is somewhat controversial. Makes several contacts with the 16S rRNA in the 70S ribosome. The chain is Large ribosomal subunit protein uL2 from Levilactobacillus brevis (strain ATCC 367 / BCRC 12310 / CIP 105137 / JCM 1170 / LMG 11437 / NCIMB 947 / NCTC 947) (Lactobacillus brevis).